A 375-amino-acid chain; its full sequence is Alpha-1,2-galactosyltransferase (375 aa).

The Cytoplasmic portion of the chain corresponds to 1–2 (MR). The chain crosses the membrane as a helical; Signal-anchor for type II membrane protein span at residues 3–23 (FAPYLISAVVITTIILGGAWW). Residues 24–375 (TSAMDTKLQT…HIQNLLKPSS (352 aa)) are Lumenal-facing.

It belongs to the glycosyltransferase 34 family. O-glycosylated.

The protein resides in the golgi apparatus membrane. Involved in the O- and N-linked oligosaccharide modification of proteins transported through the Golgi stack. This occurs in cis Golgi where the enzyme transfers galactose from UDP-galactose to a variety of mannose based acceptors. The protein is Alpha-1,2-galactosyltransferase (gma12) of Schizosaccharomyces pombe (strain 972 / ATCC 24843) (Fission yeast).